An 806-amino-acid chain; its full sequence is ATP-dependent zinc metalloprotease FTSH 9, chloroplastic (806 aa).

Residues 1–62 constitute a chloroplast transit peptide; it reads MTSIELLSPL…SSIQLPQSVP (62 aa). The segment at 84–116 is disordered; that stretch reads SSRTIVNCQEGDQKASSSEGEGKTNKDKGRKQG. A run of 2 helical transmembrane segments spans residues 133-153 and 271-291; these read IIQA…MFVV and GGFF…AGLL. An ATP-binding site is contributed by 369–376; sequence GLPGTGKT. Histidine 594 lines the Zn(2+) pocket. Glutamate 595 is an active-site residue. Residues histidine 598 and aspartate 677 each contribute to the Zn(2+) site.

The protein in the N-terminal section; belongs to the AAA ATPase family. In the C-terminal section; belongs to the peptidase M41 family. Requires Zn(2+) as cofactor.

The protein localises to the plastid. The protein resides in the chloroplast thylakoid membrane. In terms of biological role, probable ATP-dependent zinc metallopeptidase. The chain is ATP-dependent zinc metalloprotease FTSH 9, chloroplastic (FTSH9) from Arabidopsis thaliana (Mouse-ear cress).